Reading from the N-terminus, the 281-residue chain is Pantothenate synthetase (281 aa).

ATP is bound at residue 31-38; the sequence is MGNLHAGH. H38 functions as the Proton donor in the catalytic mechanism. Q62 serves as a coordination point for (R)-pantoate. Beta-alanine is bound at residue Q62. Residue 150 to 153 coordinates ATP; sequence GKKD. Q156 contributes to the (R)-pantoate binding site. ATP is bound by residues V179 and 187–190; that span reads MSSR.

It belongs to the pantothenate synthetase family. As to quaternary structure, homodimer.

Its subcellular location is the cytoplasm. The catalysed reaction is (R)-pantoate + beta-alanine + ATP = (R)-pantothenate + AMP + diphosphate + H(+). It participates in cofactor biosynthesis; (R)-pantothenate biosynthesis; (R)-pantothenate from (R)-pantoate and beta-alanine: step 1/1. Functionally, catalyzes the condensation of pantoate with beta-alanine in an ATP-dependent reaction via a pantoyl-adenylate intermediate. This chain is Pantothenate synthetase, found in Xylella fastidiosa (strain M23).